The chain runs to 408 residues: Peptidase T (408 aa).

Histidine 78 is a binding site for Zn(2+). The active site involves aspartate 80. Position 141 (aspartate 141) interacts with Zn(2+). The active-site Proton acceptor is glutamate 175. Zn(2+) is bound by residues glutamate 176, aspartate 198, and histidine 380.

This sequence belongs to the peptidase M20B family. The cofactor is Zn(2+).

The protein localises to the cytoplasm. It catalyses the reaction Release of the N-terminal residue from a tripeptide.. Functionally, cleaves the N-terminal amino acid of tripeptides. The chain is Peptidase T from Clostridium botulinum (strain ATCC 19397 / Type A).